Reading from the N-terminus, the 465-residue chain is Ribulose bisphosphate carboxylase large chain (465 aa).

Lys-4 is modified (N6,N6,N6-trimethyllysine). Asn-113 and Thr-163 together coordinate substrate. Catalysis depends on Lys-165, which acts as the Proton acceptor. Substrate is bound at residue Lys-167. Residues Lys-191, Asp-193, and Glu-194 each contribute to the Mg(2+) site. Lys-191 is subject to N6-carboxylysine. Residue His-284 is the Proton acceptor of the active site. Substrate-binding residues include Arg-285, His-317, and Ser-369.

This sequence belongs to the RuBisCO large chain family. Type I subfamily. In terms of assembly, heterohexadecamer of 8 large chains and 8 small chains; disulfide-linked. The disulfide link is formed within the large subunit homodimers. It depends on Mg(2+) as a cofactor. The disulfide bond which can form in the large chain dimeric partners within the hexadecamer appears to be associated with oxidative stress and protein turnover.

It localises to the plastid. Its subcellular location is the chloroplast. The enzyme catalyses 2 (2R)-3-phosphoglycerate + 2 H(+) = D-ribulose 1,5-bisphosphate + CO2 + H2O. It carries out the reaction D-ribulose 1,5-bisphosphate + O2 = 2-phosphoglycolate + (2R)-3-phosphoglycerate + 2 H(+). In terms of biological role, ruBisCO catalyzes two reactions: the carboxylation of D-ribulose 1,5-bisphosphate, the primary event in carbon dioxide fixation, as well as the oxidative fragmentation of the pentose substrate in the photorespiration process. Both reactions occur simultaneously and in competition at the same active site. The protein is Ribulose bisphosphate carboxylase large chain of Cornus florida (Flowering dogwood).